Consider the following 227-residue polypeptide: Esterase OVCA2 (227 aa).

Residues S119, D179, and H206 each act as charge relay system in the active site.

Belongs to the LovG family.

It carries out the reaction a carboxylic ester + H2O = an alcohol + a carboxylate + H(+). Exhibits ester hydrolase activity with a strong preference for long-chain alkyl ester substrates and high selectivity against a variety of short, branched, and substituted esters. Is able to hydrolyze ester bonds within a wide range of p-nitrophenyl derivatives (C2-C14) in vitro, with a strong preference toward substrates of &gt;8 carbons. This is Esterase OVCA2 (OVCA2) from Bos taurus (Bovine).